The chain runs to 283 residues: Pantothenate synthetase (283 aa).

31-38 lines the ATP pocket; sequence MGALHDGH. His38 functions as the Proton donor in the catalytic mechanism. Gln62 is a (R)-pantoate binding site. Residue Gln62 participates in beta-alanine binding. 148 to 151 is an ATP binding site; that stretch reads GKKD. Gln154 serves as a coordination point for (R)-pantoate. Residues Val177 and 185 to 188 contribute to the ATP site; that span reads KSSR.

It belongs to the pantothenate synthetase family. As to quaternary structure, homodimer.

Its subcellular location is the cytoplasm. It catalyses the reaction (R)-pantoate + beta-alanine + ATP = (R)-pantothenate + AMP + diphosphate + H(+). It functions in the pathway cofactor biosynthesis; (R)-pantothenate biosynthesis; (R)-pantothenate from (R)-pantoate and beta-alanine: step 1/1. Functionally, catalyzes the condensation of pantoate with beta-alanine in an ATP-dependent reaction via a pantoyl-adenylate intermediate. This chain is Pantothenate synthetase, found in Staphylococcus aureus (strain bovine RF122 / ET3-1).